The sequence spans 241 residues: tRNA pseudouridine synthase B (241 aa).

D45 functions as the Nucleophile in the catalytic mechanism.

This sequence belongs to the pseudouridine synthase TruB family. Type 1 subfamily.

It carries out the reaction uridine(55) in tRNA = pseudouridine(55) in tRNA. Responsible for synthesis of pseudouridine from uracil-55 in the psi GC loop of transfer RNAs. In Chlamydia muridarum (strain MoPn / Nigg), this protein is tRNA pseudouridine synthase B.